A 309-amino-acid polypeptide reads, in one-letter code: ATP synthase gamma chain (309 aa).

It belongs to the ATPase gamma chain family. F-type ATPases have 2 components, CF(1) - the catalytic core - and CF(0) - the membrane proton channel. CF(1) has five subunits: alpha(3), beta(3), gamma(1), delta(1), epsilon(1). CF(0) has three main subunits: a, b and c.

The protein localises to the cell membrane. Produces ATP from ADP in the presence of a proton gradient across the membrane. The gamma chain is believed to be important in regulating ATPase activity and the flow of protons through the CF(0) complex. In Ligilactobacillus salivarius (strain UCC118) (Lactobacillus salivarius), this protein is ATP synthase gamma chain.